We begin with the raw amino-acid sequence, 463 residues long: Chromosomal replication initiator protein DnaA (463 aa).

The tract at residues 1 to 83 is domain I, interacts with DnaA modulators; the sequence is MSTNQIILTD…LQLFQHYNNT (83 aa). Residues 83-124 are domain II; the sequence is TIKSIEIITKELPGITQTVIALPTKTFADIGSSELNAENIFS. The interval 125-343 is domain III, AAA+ region; that stretch reads TLDVRFTFDN…GALNKVIAHS (219 aa). Residues G171, G173, K174, and T175 each coordinate ATP. The tract at residues 344-463 is domain IV, binds dsDNA; the sequence is NFTLKEITLE…INLLMKILQN (120 aa).

Belongs to the DnaA family. Oligomerizes as a right-handed, spiral filament on DNA at oriC.

The protein localises to the cytoplasm. Plays an essential role in the initiation and regulation of chromosomal replication. ATP-DnaA binds to the origin of replication (oriC) to initiate formation of the DNA replication initiation complex once per cell cycle. Binds the DnaA box (a 9 base pair repeat at the origin) and separates the double-stranded (ds)DNA. Forms a right-handed helical filament on oriC DNA; dsDNA binds to the exterior of the filament while single-stranded (ss)DNA is stabiized in the filament's interior. The ATP-DnaA-oriC complex binds and stabilizes one strand of the AT-rich DNA unwinding element (DUE), permitting loading of DNA polymerase. After initiation quickly degrades to an ADP-DnaA complex that is not apt for DNA replication. Binds acidic phospholipids. This is Chromosomal replication initiator protein DnaA from Rickettsia massiliae (strain Mtu5).